We begin with the raw amino-acid sequence, 589 residues long: Proline--tRNA ligase (589 aa).

The protein belongs to the class-II aminoacyl-tRNA synthetase family. ProS type 1 subfamily. As to quaternary structure, homodimer.

The protein localises to the cytoplasm. The enzyme catalyses tRNA(Pro) + L-proline + ATP = L-prolyl-tRNA(Pro) + AMP + diphosphate. Catalyzes the attachment of proline to tRNA(Pro) in a two-step reaction: proline is first activated by ATP to form Pro-AMP and then transferred to the acceptor end of tRNA(Pro). As ProRS can inadvertently accommodate and process non-cognate amino acids such as alanine and cysteine, to avoid such errors it has two additional distinct editing activities against alanine. One activity is designated as 'pretransfer' editing and involves the tRNA(Pro)-independent hydrolysis of activated Ala-AMP. The other activity is designated 'posttransfer' editing and involves deacylation of mischarged Ala-tRNA(Pro). The misacylated Cys-tRNA(Pro) is not edited by ProRS. The protein is Proline--tRNA ligase of Nocardioides sp. (strain ATCC BAA-499 / JS614).